A 418-amino-acid chain; its full sequence is Lactate dehydrogenase (NAD(+),ferredoxin) subunit LctC (418 aa).

FAD contacts are provided by residues R285, I325 to S328, S343 to F348, N362, and D380 to L381.

It belongs to the ETF alpha-subunit/FixB family. As to quaternary structure, part of the stable heterotrimeric lactate dehydrogenase-Etf complex, which is formed by the lactate dehydrogenase LctD and the electron-transferring flavoprotein (Etf) alpha (LctC) and beta (LctB) subunits. FAD is required as a cofactor. It depends on [4Fe-4S] cluster as a cofactor.

The protein resides in the cytoplasm. It catalyses the reaction lactate + 2 reduced [2Fe-2S]-[ferredoxin] + 2 NAD(+) = 2 oxidized [2Fe-2S]-[ferredoxin] + pyruvate + 2 NADH. Its activity is regulated as follows. Activity is stimulated by divalent cations. Highest stimulation is observed with Ca(2+). Its function is as follows. The lactate dehydrogenase-Etf complex catalyzes the oxidation of lactate to pyruvate. It uses flavin-based electron confurcation to drive endergonic lactate oxidation with NAD(+) as oxidant at the expense of simultaneous exergonic electron flow from reduced ferredoxin to NAD(+). The electron transfer flavoprotein (Etf) mediates the electron transfer between the different donors and acceptors. The chain is Lactate dehydrogenase (NAD(+),ferredoxin) subunit LctC from Acetobacterium woodii (strain ATCC 29683 / DSM 1030 / JCM 2381 / KCTC 1655 / WB1).